Consider the following 383-residue polypeptide: G-protein coupled receptor E1 (383 aa).

A run of 9 helical transmembrane segments spans residues S13–A35, L78–I98, M109–M129, V160–A180, I190–F210, V242–I262, L279–L299, L323–V343, and L351–S371. A disulfide bridge connects residues C145 and C222.

It belongs to the G-protein coupled receptor 1 family.

It is found in the host membrane. The sequence is that of G-protein coupled receptor E1 (E1) from Equine herpesvirus 2 (strain 86/87) (EHV-2).